A 439-amino-acid polypeptide reads, in one-letter code: Tryptophan synthase beta chain 2 (439 aa).

N6-(pyridoxal phosphate)lysine is present on Lys-99.

This sequence belongs to the TrpB family. In terms of assembly, tetramer of two alpha and two beta chains. Requires pyridoxal 5'-phosphate as cofactor.

The catalysed reaction is (1S,2R)-1-C-(indol-3-yl)glycerol 3-phosphate + L-serine = D-glyceraldehyde 3-phosphate + L-tryptophan + H2O. It participates in amino-acid biosynthesis; L-tryptophan biosynthesis; L-tryptophan from chorismate: step 5/5. Its function is as follows. The beta subunit is responsible for the synthesis of L-tryptophan from indole and L-serine. The protein is Tryptophan synthase beta chain 2 (trpB2) of Corynebacterium efficiens (strain DSM 44549 / YS-314 / AJ 12310 / JCM 11189 / NBRC 100395).